The following is a 732-amino-acid chain: Polyribonucleotide nucleotidyltransferase (732 aa).

Residues Asp-515 and Asp-521 each contribute to the Mg(2+) site. The 61-residue stretch at 581–641 (PKLELFNVDP…KNVDAAKDYI (61 aa)) folds into the KH domain. The S1 motif domain maps to 672–731 (GDEFTGSVKSVVDFGVFIELKDGVDGLLHISKIKSPLNVGDQVKVCVSEQKGNKISLSLV).

This sequence belongs to the polyribonucleotide nucleotidyltransferase family. Mg(2+) serves as cofactor.

The protein resides in the cytoplasm. The enzyme catalyses RNA(n+1) + phosphate = RNA(n) + a ribonucleoside 5'-diphosphate. Functionally, involved in mRNA degradation. Catalyzes the phosphorolysis of single-stranded polyribonucleotides processively in the 3'- to 5'-direction. This chain is Polyribonucleotide nucleotidyltransferase, found in Campylobacter concisus (strain 13826).